The following is a 132-amino-acid chain: Small ribosomal subunit protein uS8 (132 aa).

This sequence belongs to the universal ribosomal protein uS8 family. In terms of assembly, part of the 30S ribosomal subunit. Contacts proteins S5 and S12.

Its function is as follows. One of the primary rRNA binding proteins, it binds directly to 16S rRNA central domain where it helps coordinate assembly of the platform of the 30S subunit. In Cereibacter sphaeroides (strain ATCC 17025 / ATH 2.4.3) (Rhodobacter sphaeroides), this protein is Small ribosomal subunit protein uS8.